The sequence spans 401 residues: (1R,4R,5S)-(-)-guaia-6,10(14)-diene synthase (401 aa).

Residues Asp134 and Glu139 each contribute to the Mg(2+) site. Positions 134–138 (DDQFD) match the DDXXD motif motif. Arg242 provides a ligand contact to substrate. Positions 288 and 292 each coordinate Mg(2+). Residue Lys295 coordinates substrate. Residue Asp296 participates in Mg(2+) binding. Position 375 to 376 (375 to 376 (RY)) interacts with substrate.

The protein belongs to the terpene synthase family. Mg(2+) serves as cofactor.

The enzyme catalyses (2E,6E)-farnesyl diphosphate = (1R,4R,5S)-(-)-guaia-6,10(14)-diene + diphosphate. It functions in the pathway secondary metabolite biosynthesis; terpenoid biosynthesis. In terms of biological role, catalyzes the conversion of (2E,6E)-farnesyl diphosphate (FPP) to yield the bicyclic sesquiterpene guaia-6,10(14)-diene via a 1,10-cyclization, which requires the abstraction of the pyrophosphate from FPP to yield the (E,E)-germacradienyl cation. The only accepted substrate is farnesyl diphosphate (FPP). This Fusarium mangiferae (Mango malformation disease fungus) protein is (1R,4R,5S)-(-)-guaia-6,10(14)-diene synthase.